Reading from the N-terminus, the 443-residue chain is Chromosomal replication initiator protein DnaA (443 aa).

The interval 1–73 (MYGDYRQIWE…YDAASKVTNR (73 aa)) is domain I, interacts with DnaA modulators. Positions 73–106 (RFIEIKILSEDEEEYREIKESIERENSSESTLLS) are domain II. The interval 107–323 (TLNPKYTFDT…GALIRIVAFA (217 aa)) is domain III, AAA+ region. Positions 151, 153, 154, and 155 each coordinate ATP. The segment at 324–443 (TLTKSNIDLE…EELKKRIKGY (120 aa)) is domain IV, binds dsDNA.

It belongs to the DnaA family. In terms of assembly, oligomerizes as a right-handed, spiral filament on DNA at oriC.

It is found in the cytoplasm. Plays an essential role in the initiation and regulation of chromosomal replication. ATP-DnaA binds to the origin of replication (oriC) to initiate formation of the DNA replication initiation complex once per cell cycle. Binds the DnaA box (a 9 base pair repeat at the origin) and separates the double-stranded (ds)DNA. Forms a right-handed helical filament on oriC DNA; dsDNA binds to the exterior of the filament while single-stranded (ss)DNA is stabiized in the filament's interior. The ATP-DnaA-oriC complex binds and stabilizes one strand of the AT-rich DNA unwinding element (DUE), permitting loading of DNA polymerase. After initiation quickly degrades to an ADP-DnaA complex that is not apt for DNA replication. Binds acidic phospholipids. The polypeptide is Chromosomal replication initiator protein DnaA (Caldanaerobacter subterraneus subsp. tengcongensis (strain DSM 15242 / JCM 11007 / NBRC 100824 / MB4) (Thermoanaerobacter tengcongensis)).